The primary structure comprises 410 residues: Peptidase T (410 aa).

His79 contacts Zn(2+). Asp81 is an active-site residue. Residue Asp142 participates in Zn(2+) binding. The active-site Proton acceptor is the Glu176. 3 residues coordinate Zn(2+): Glu177, Asp199, and His381.

This sequence belongs to the peptidase M20B family. Requires Zn(2+) as cofactor.

The protein localises to the cytoplasm. It carries out the reaction Release of the N-terminal residue from a tripeptide.. Cleaves the N-terminal amino acid of tripeptides. This chain is Peptidase T, found in Listeria monocytogenes serotype 4b (strain CLIP80459).